The sequence spans 247 residues: EGF-like domain-containing protein C02B10.3 (247 aa).

An N-terminal signal peptide occupies residues 1–17 (MTGALCIVLFGVTMVTA). Residues 18 to 220 (ERPKIKDTHG…LCDKRCQKGH (203 aa)) lie on the Extracellular side of the membrane. EGF-like domains are found at residues 114–150 (FGTS…RFCE) and 180–213 (SGAS…DLCD). 4 disulfides stabilise this stretch: C123-C138, C140-C149, C190-C201, and C203-C212. An N-linked (GlcNAc...) asparagine glycan is attached at N126. The chain crosses the membrane as a helical span at residues 221 to 240 (VTCSTCSSFIPAALFAIILL). Residues 241–247 (CVNKFNY) lie on the Cytoplasmic side of the membrane.

It localises to the membrane. This Caenorhabditis elegans protein is EGF-like domain-containing protein C02B10.3.